A 101-amino-acid polypeptide reads, in one-letter code: Putative membrane protein insertion efficiency factor (101 aa).

Belongs to the UPF0161 family.

The protein localises to the cell membrane. Functionally, could be involved in insertion of integral membrane proteins into the membrane. This chain is Putative membrane protein insertion efficiency factor, found in Lacticaseibacillus casei (strain BL23) (Lactobacillus casei).